A 523-amino-acid chain; its full sequence is Carboxypeptidase Y (523 aa).

An N-terminal signal peptide occupies residues 1 to 20; it reads MILHTYIILSLLTIFPKAIG. Positions 21-107 are excised as a propeptide; that stretch reads LSLQMPMALE…QELPNYRLRV (87 aa). Disulfide bonds link cysteine 162–cysteine 401, cysteine 296–cysteine 310, cysteine 320–cysteine 343, cysteine 327–cysteine 336, and cysteine 365–cysteine 371. An N-linked (GlcNAc...) asparagine glycan is attached at asparagine 193. Residue serine 249 is part of the active site. The N-linked (GlcNAc...) asparagine glycan is linked to asparagine 271. The active site involves aspartate 441. Asparagine 484 and asparagine 487 each carry an N-linked (GlcNAc...) asparagine glycan. Histidine 498 is an active-site residue.

This sequence belongs to the peptidase S10 family.

The protein resides in the vacuole. The catalysed reaction is Release of a C-terminal amino acid with broad specificity.. Functionally, involved in degradation of small peptides. The sequence is that of Carboxypeptidase Y (PRC1) from Komagataella phaffii (strain GS115 / ATCC 20864) (Yeast).